We begin with the raw amino-acid sequence, 1269 residues long: MSADNIEVIVKGTPSYTKSKNSDIKYQLGKESNVSHLRTFLSFEESTKFYTSYDLIENSRVVDDEDVLGDLAGNGSSLTFQFKPKAYNLVTAVQHIVGLRETLGFSSELEDGISEFAISSGSQFQDMSLEPNSEKSNGSETTISDQEKVKFLQTCNELLESTNTDFNIASLKTGNLLVTPVLKSLHFSAYNPVPAFYKNKGHLLYLQASTLENETFHITTSISGFYVNKSSSVKFDPSPKDEFEPKFNLIDLLTQVSKKFHQHVTSLRNKLSSTDSAQYVKPASCFLSKPWLVSQLPSNNGDFMRTQLEHFNNDDERNFCDEFQAIKDLEINSSYDRLKNEKITAGLIHEFNSEAVKGAMAIFNNELTPIDPGTTGENAVYFHKSLIFSFVADVSGTYSSIGGNEAAYAVANQDLQIINSLNRLGLKGIRHCLTAIIDYAGHRLLVQSPVPGLLTPVGVNIIVDEEDKEVAEPMETLISVNYGYDDFVATLKFDEKFHEKVCEFSKNFYLKEHKVEEVDLRISSKSKGIFGVDQRAYILDLANTNPVDIEFVKAHYDDVKENKYPHRQVLLRRELVERWRAEKIAASGKTLQEASEDVSFIYNPDAYVIDGVEDENVADMSKFLNDTVLTLFLEDILKGNSNIPYDGQHLTDLFHTNGVNMRYLGKAIEFVKAKYEDQKQERAKYLSKIEQENKEYQDWETGYLVKVEKLIKERQEEINKYVQQGKEVPSKLKEQIQLDKADLKEPVRNEGCTVEVDQFEGLIAVCELEMIARSIKHIFRQQSKKLSSPTLVPHLVAFFLNLLFGKSYNESVTVENLDALFDINELEFAQYTREQLIEEVRVQAKLRFRYDLTSEWFDINEKRFSKYALIRAIAQKFGIQLINKEYFFTKEQYEKWKQAQDKKLRSKIVDPKQTFSINDFSLRPVIKGAEFQSLIAEELWIQGASLVNAVSVEEEEAEKKKEESKKAAADGEDAGSSGATSKEEEQAKERAKKMNEALTLLGQSIAFREDIFGLVHPSLVSSYLLLSNMYSRLGQYSQAVTFCNKAALLSERCYGVDSFETVRILSNLAYLEYGQGSIYNSALVLKKVHELLKLLAPFVHSGRVNVFNLLFQIAASTEDKKVQIKILNKLSELLLKITGSEETLPYGQNESRIANLYTSLDDMSHALSHIEKAKSIFSKELGLNDQTTLTSKQWSETIKGIITKQQQEKKLASAQQATKPANISQKKGKKSSSSSPALTNKSVDELLQFIEGPGASKSSKKSKKKHTKN.

Positions 297 to 552 (PSNNGDFMRT…NTNPVDIEFV (256 aa)) constitute a Clu domain. The segment covering 958-969 (EKKKEESKKAAA) has biased composition (basic and acidic residues). The interval 958–989 (EKKKEESKKAAADGEDAGSSGATSKEEEQAKE) is disordered. TPR repeat units lie at residues 1020–1053 (VSSY…SERC) and 1147–1180 (GQNE…FSKE). The segment at 1211-1269 (LASAQQATKPANISQKKGKKSSSSSPALTNKSVDELLQFIEGPGASKSSKKSKKKHTKN) is disordered. Polar residues predominate over residues 1213–1223 (SAQQATKPANI). A compositionally biased stretch (basic residues) spans 1258–1269 (SSKKSKKKHTKN).

This sequence belongs to the CLU family. In terms of assembly, may associate with the eukaryotic translation initiation factor 3 (eIF-3) complex.

It is found in the cytoplasm. MRNA-binding protein involved in proper cytoplasmic distribution of mitochondria. The chain is Clustered mitochondria protein homolog from Kluyveromyces lactis (strain ATCC 8585 / CBS 2359 / DSM 70799 / NBRC 1267 / NRRL Y-1140 / WM37) (Yeast).